The sequence spans 130 residues: Small ribosomal subunit protein uS8 (130 aa).

This sequence belongs to the universal ribosomal protein uS8 family.

This Strongylocentrotus purpuratus (Purple sea urchin) protein is Small ribosomal subunit protein uS8 (RPS15A).